Reading from the N-terminus, the 341-residue chain is Ketol-acid reductoisomerase (NADP(+)) (341 aa).

Residues Thr-2–Thr-182 form the KARI N-terminal Rossmann domain. NADP(+) contacts are provided by residues Tyr-25 to Gln-28, Lys-48, Ser-51, Ser-53, and Asp-83 to Gln-86. His-108 is a catalytic residue. Gly-134 contributes to the NADP(+) binding site. In terms of domain architecture, KARI C-terminal knotted spans Thr-183 to Asn-328. Mg(2+) is bound by residues Asp-191, Glu-195, Glu-227, and Glu-231. Residue Ser-252 participates in substrate binding.

The protein belongs to the ketol-acid reductoisomerase family. Mg(2+) is required as a cofactor.

The catalysed reaction is (2R)-2,3-dihydroxy-3-methylbutanoate + NADP(+) = (2S)-2-acetolactate + NADPH + H(+). It catalyses the reaction (2R,3R)-2,3-dihydroxy-3-methylpentanoate + NADP(+) = (S)-2-ethyl-2-hydroxy-3-oxobutanoate + NADPH + H(+). The protein operates within amino-acid biosynthesis; L-isoleucine biosynthesis; L-isoleucine from 2-oxobutanoate: step 2/4. It functions in the pathway amino-acid biosynthesis; L-valine biosynthesis; L-valine from pyruvate: step 2/4. Its function is as follows. Involved in the biosynthesis of branched-chain amino acids (BCAA). Catalyzes an alkyl-migration followed by a ketol-acid reduction of (S)-2-acetolactate (S2AL) to yield (R)-2,3-dihydroxy-isovalerate. In the isomerase reaction, S2AL is rearranged via a Mg-dependent methyl migration to produce 3-hydroxy-3-methyl-2-ketobutyrate (HMKB). In the reductase reaction, this 2-ketoacid undergoes a metal-dependent reduction by NADPH to yield (R)-2,3-dihydroxy-isovalerate. The chain is Ketol-acid reductoisomerase (NADP(+)) from Clavibacter sepedonicus (Clavibacter michiganensis subsp. sepedonicus).